A 563-amino-acid chain; its full sequence is Solute carrier family 22 member 1 (563 aa).

Over 1 to 21 the chain is Cytoplasmic; that stretch reads MLTVDDVLEQVGEFGWFQKQT. A helical membrane pass occupies residues 22–42; it reads FLILCLLSAAFAPIYVGIVFL. At 43-144 the chain is on the extracellular side; the sequence is AFTPDHRCRS…LVCDDSWKVD (102 aa). N71 carries an N-linked (GlcNAc...) asparagine glycan. A helical transmembrane segment spans residues 145-165; the sequence is LFQSCVNLGFFLGSLGVGYIA. Residues 166–171 are Cytoplasmic-facing; the sequence is DRFGRK. Residues 172-192 form a helical membrane-spanning segment; that stretch reads VCLLATTLTCASLGVLTAVAP. The Extracellular segment spans residues 193-196; sequence DYTS. The chain crosses the membrane as a helical span at residues 197–219; the sequence is LLIFRLLQGLVSKGSWTAGYTLI. Residues 220-232 are Cytoplasmic-facing; that stretch reads TEFVGLGYRRTVA. The helical transmembrane segment at 233 to 253 threads the bilayer; that stretch reads ILYQMAFTVGLVLLSGLAYIL. The Extracellular segment spans residues 254–257; the sequence is PHWR. A helical membrane pass occupies residues 258–278; that stretch reads WLQLAVSLPIFLLLFRFWFVP. Residues 278 to 282 carry the Proline-rich sequence motif; that stretch reads PESPR. The Cytoplasmic portion of the chain corresponds to 279 to 342; that stretch reads ESPRWLLSQK…FRTPNLRKYT (64 aa). S328 carries the post-translational modification Phosphoserine. A helical transmembrane segment spans residues 343–363; that stretch reads FILMYLWFTSSVVYQGLIMHV. Over 364 to 371 the chain is Extracellular; the sequence is GATGGNLY. Residues 372-392 form a helical membrane-spanning segment; that stretch reads LDFLYSALVEFPAGFIILVTI. Over 393-398 the chain is Cytoplasmic; that stretch reads DRFGRR. A helical membrane pass occupies residues 399-418; that stretch reads YPLATSNLAAGLACFLMIFI. The Extracellular segment spans residues 419–423; sequence PHDLP. The helical transmembrane segment at 424-446 threads the bilayer; the sequence is WLNIMVACVGRMGITIVFQMVCL. Over 447–459 the chain is Cytoplasmic; it reads VNAELFPTFIRNL. The helical transmembrane segment at 460 to 480 threads the bilayer; that stretch reads GMMVCSSLCDLGGVLTPFLVF. Over 481-487 the chain is Extracellular; the sequence is RLMEVWQ. A helical membrane pass occupies residues 488–508; it reads GSPLILFAALGLVAGGMTLLL. Topologically, residues 509–563 are cytoplasmic; sequence PETKGVTLPETIEDAENLQRKAKPKENKIYLQVQTSELNTQAAERDASQGTAQQK.

Belongs to the major facilitator (TC 2.A.1) superfamily. Organic cation transporter (TC 2.A.1.19) family. In terms of processing, phosphorylated.

The protein localises to the basolateral cell membrane. It localises to the apical cell membrane. The protein resides in the lateral cell membrane. It is found in the basal cell membrane. Its subcellular location is the cell membrane. The enzyme catalyses 1-methylnicotinamide(out) = 1-methylnicotinamide(in). It catalyses the reaction dopamine(out) = dopamine(in). The catalysed reaction is serotonin(out) = serotonin(in). It carries out the reaction (R)-adrenaline(out) = (R)-adrenaline(in). The enzyme catalyses (R)-noradrenaline(out) = (R)-noradrenaline(in). It catalyses the reaction histamine(out) = histamine(in). The catalysed reaction is guanidine(out) = guanidine(in). It carries out the reaction choline(out) = choline(in). The enzyme catalyses acetylcholine(in) = acetylcholine(out). It catalyses the reaction thiamine(in) = thiamine(out). The catalysed reaction is spermidine(in) = spermidine(out). It carries out the reaction agmatine(out) = agmatine(in). The enzyme catalyses putrescine(out) = putrescine(in). It catalyses the reaction (R)-carnitine(in) = (R)-carnitine(out). The catalysed reaction is O-isobutanoyl-(R)-carnitine(in) = O-isobutanoyl-(R)-carnitine(out). It carries out the reaction O-acetyl-(R)-carnitine(in) = O-acetyl-(R)-carnitine(out). The enzyme catalyses O-3-hydroxybutanoyl-(R)-carnitine(in) = O-3-hydroxybutanoyl-(R)-carnitine(out). It catalyses the reaction O-propanoyl-(R)-carnitine(in) = O-propanoyl-(R)-carnitine(out). The catalysed reaction is O-butanoyl-(R)-carnitine(in) = O-butanoyl-(R)-carnitine(out). It carries out the reaction O-2-methylbutanoyl-(R)-carnitine(in) = O-2-methylbutanoyl-(R)-carnitine(out). The enzyme catalyses O-3-methylbutanoyl-(R)-carnitine(in) = O-3-methylbutanoyl-(R)-carnitine(out). It catalyses the reaction O-hexanoyl-(R)-carnitine(in) = O-hexanoyl-(R)-carnitine(out). The catalysed reaction is L-histidyl-L-proline diketopiperazine(in) = L-histidyl-L-proline diketopiperazine(out). It carries out the reaction (R)-salsolinol(in) = (R)-salsolinol(out). The enzyme catalyses prostaglandin F2alpha(out) = prostaglandin F2alpha(in). It catalyses the reaction prostaglandin E2(out) = prostaglandin E2(in). Its activity is regulated as follows. Phosphorylation of the transporter leads to changes in its substrate affinity, resulting in a regulation of the transport activity. In contrast with rat ortholog, ASP uptake is inhibited by protein kinase A (PKA) and C (PKC) activation. ASP uptake is also endogenously activated by calmodulin, the calmodulin-dependent kinase II and LCK tyrosine kinase. Inhibited by cGMP, most likely through a cGMP-binding protein that interacts with OCT1. Its function is as follows. Electrogenic voltage-dependent transporter that mediates the transport of a variety of organic cations such as endogenous bioactive amines, cationic drugs and xenobiotics. Functions as a pH- and Na(+)-independent, bidirectional transporter. Cation cellular uptake or release is driven by the electrochemical potential (i.e. membrane potential and concentration gradient) and substrate selectivity. Hydrophobicity is a major requirement for recognition in polyvalent substrates and inhibitors. Primarily expressed in the basolateral membrane of hepatocytes and proximal tubules and involved in the uptake and disposition of cationic compounds from the blood by hepatic and renal clearance. Most likely functions as an uptake carrier in enterocytes contributing to the intestinal elimination of organic cations from the systemic circulation. Transports endogenous monoamines such as N-1-methylnicotinamide (NMN), guanidine, neurotransmitters dopamine, serotonin, noradrenaline, adrenaline and histamine, and quaternary ammonium compound such as choline. Also transports natural polyamines such as spermidine, agmatine and putrescine at low affinity, but relatively high turnover. Involved in the hepatic and intestinal uptake of the vitamin B1/thiamine, hence regulating hepatic lipid and energy metabolism. Contributes to the influx and efflux of fatty acid carriers carnitines and acylcarnitines across the basolateral membrane of hepatocytes, from the liver to the systemic circulation and inversely and may be involved in regulating the systemic availability of hepatic acylcarnitines. Also capable of transporting non-amine endogenous compounds such as prostaglandin E2 (PGE2) and prostaglandin F2-alpha (PGF2-alpha). May contribute to the transport of cationic compounds in testes across the blood-testis-barrier. Also mediates the uptake of xenobiotics tributylmethylammonium (TBuMA), quinidine, N-methyl-quinine (NMQ), N-methyl-quinidine (NMQD) N-(4,4-azo-n-pentyl)-quinuclidine (APQ), azidoprocainamide methoiodide (AMP), N-(4,4-azo-n-pentyl)-21-deoxyajmalinium (APDA) and 4-(4-(dimethylamino)styryl)-N-methylpyridinium (ASP). The polypeptide is Solute carrier family 22 member 1 (SLC22A1) (Bos taurus (Bovine)).